A 261-amino-acid chain; its full sequence is Proteasome subunit alpha (261 aa).

The disordered stretch occupies residues Asn-242–Glu-261.

The protein belongs to the peptidase T1A family. As to quaternary structure, the 20S proteasome core is composed of 14 alpha and 14 beta subunits that assemble into four stacked heptameric rings, resulting in a barrel-shaped structure. The two inner rings, each composed of seven catalytic beta subunits, are sandwiched by two outer rings, each composed of seven alpha subunits. The catalytic chamber with the active sites is on the inside of the barrel. Has a gated structure, the ends of the cylinder being occluded by the N-termini of the alpha-subunits. Is capped at one or both ends by the proteasome regulatory ATPase, PAN.

The protein localises to the cytoplasm. The formation of the proteasomal ATPase PAN-20S proteasome complex, via the docking of the C-termini of PAN into the intersubunit pockets in the alpha-rings, triggers opening of the gate for substrate entry. Interconversion between the open-gate and close-gate conformations leads to a dynamic regulation of the 20S proteasome proteolysis activity. Functionally, component of the proteasome core, a large protease complex with broad specificity involved in protein degradation. The M.jannaschii proteasome is able to cleave oligopeptides after Glu, Asp, Tyr, Phe, Trp, slightly after Arg, but not after Ala. Thus, displays caspase-like and chymotrypsin-like activities and low level of trypsin-like activity. This chain is Proteasome subunit alpha, found in Methanocaldococcus jannaschii (strain ATCC 43067 / DSM 2661 / JAL-1 / JCM 10045 / NBRC 100440) (Methanococcus jannaschii).